The primary structure comprises 666 residues: Galactocerebrosidase (666 aa).

The signal sequence occupies residues 1–22; that stretch reads MIYKLYFAIALCFSLCFDLCIA. Threonine 91 is a binding site for substrate. Residue asparagine 125 is glycosylated (N-linked (GlcNAc...) asparagine). 2 residues coordinate substrate: tryptophan 133 and asparagine 179. Glutamate 180 functions as the Proton donor/acceptor in the catalytic mechanism. Residue glutamate 256 is the Nucleophile of the active site. Cysteine 269 and cysteine 376 are oxidised to a cystine. A glycan (N-linked (GlcNAc...) asparagine) is linked at asparagine 361. Position 378 (arginine 378) interacts with substrate. 4 N-linked (GlcNAc...) asparagine glycosylation sites follow: asparagine 385, asparagine 390, asparagine 500, and asparagine 540.

The protein belongs to the glycosyl hydrolase 59 family.

The protein localises to the lysosome. It catalyses the reaction a beta-D-galactosyl-(1&lt;-&gt;1')-N-acylsphing-4-enine + H2O = an N-acylsphing-4-enine + D-galactose. The catalysed reaction is beta-D-galactosyl-(1&lt;-&gt;1)-sphing-4-enine + H2O = sphing-4-enine + D-galactose. The enzyme catalyses a D-galactosylceramide + H2O = an N-acyl-sphingoid base + D-galactose. Functionally, hydrolyzes the galactose ester bonds of glycolipids such as galactosylceramide and galactosylsphingosine. This chain is Galactocerebrosidase, found in Salmo salar (Atlantic salmon).